Here is a 367-residue protein sequence, read N- to C-terminus: Outer membrane protein assembly factor BamC (367 aa).

The N-terminal stretch at Met-1–Gly-16 is a signal peptide. Cys-17 carries N-palmitoyl cysteine lipidation. Cys-17 carries the S-diacylglycerol cysteine lipid modification.

This sequence belongs to the BamC family. In terms of assembly, part of the Bam complex.

It is found in the cell outer membrane. In terms of biological role, part of the outer membrane protein assembly complex, which is involved in assembly and insertion of beta-barrel proteins into the outer membrane. This Thiobacillus denitrificans (strain ATCC 25259 / T1) protein is Outer membrane protein assembly factor BamC.